A 416-amino-acid chain; its full sequence is UDP-N-acetylmuramoylalanine--D-glutamate ligase (416 aa).

Residue 104-110 (GSNGKST) participates in ATP binding.

This sequence belongs to the MurCDEF family.

It is found in the cytoplasm. It catalyses the reaction UDP-N-acetyl-alpha-D-muramoyl-L-alanine + D-glutamate + ATP = UDP-N-acetyl-alpha-D-muramoyl-L-alanyl-D-glutamate + ADP + phosphate + H(+). Its pathway is cell wall biogenesis; peptidoglycan biosynthesis. In terms of biological role, cell wall formation. Catalyzes the addition of glutamate to the nucleotide precursor UDP-N-acetylmuramoyl-L-alanine (UMA). This chain is UDP-N-acetylmuramoylalanine--D-glutamate ligase, found in Francisella tularensis subsp. mediasiatica (strain FSC147).